A 456-amino-acid chain; its full sequence is Glycosyl hydrolase family 109 protein (456 aa).

A signal peptide (tat-type signal) is located at residues methionine 1–alanine 31. NAD(+)-binding positions include glutamine 62–arginine 63, aspartate 84, tryptophan 133–histidine 136, glutamate 153–valine 154, and asparagine 182. Substrate contacts are provided by residues tyrosine 211, arginine 230, tyrosine 242–histidine 245, and tyrosine 324. Tyrosine 242 contacts NAD(+).

This sequence belongs to the Gfo/Idh/MocA family. Glycosyl hydrolase 109 subfamily. NAD(+) serves as cofactor. Predicted to be exported by the Tat system. The position of the signal peptide cleavage has not been experimentally proven.

Glycosidase. This Shewanella pealeana (strain ATCC 700345 / ANG-SQ1) protein is Glycosyl hydrolase family 109 protein.